Consider the following 219-residue polypeptide: Small ribosomal subunit protein uS3c (219 aa).

The KH type-2 domain maps to 43-118; the sequence is IKNYVQKNMK…KLNIAITRIA (76 aa).

This sequence belongs to the universal ribosomal protein uS3 family. As to quaternary structure, part of the 30S ribosomal subunit.

The protein localises to the plastid. It localises to the chloroplast. The polypeptide is Small ribosomal subunit protein uS3c (rps3) (Panax ginseng (Korean ginseng)).